A 115-amino-acid polypeptide reads, in one-letter code: MKLLIFAILIALSSSVPQLSEKAEEAVDLAYQEKNNLFDLGSVAGDILSRSGCHVSFGCHKGYCWAGCGDPTNPWSWGENWCYTTKSYSQSYSYVQCTQDSECDGCWKCGGPCSA.

Positions 1-15 are cleaved as a signal peptide; sequence MKLLIFAILIALSSS.

This chain is Allergen Tha p 2, found in Thaumetopoea pityocampa (Pine processionary moth).